The following is a 196-amino-acid chain: Imidazoleglycerol-phosphate dehydratase (196 aa).

It belongs to the imidazoleglycerol-phosphate dehydratase family.

It localises to the cytoplasm. The catalysed reaction is D-erythro-1-(imidazol-4-yl)glycerol 3-phosphate = 3-(imidazol-4-yl)-2-oxopropyl phosphate + H2O. Its pathway is amino-acid biosynthesis; L-histidine biosynthesis; L-histidine from 5-phospho-alpha-D-ribose 1-diphosphate: step 6/9. The protein is Imidazoleglycerol-phosphate dehydratase of Lachnoclostridium phytofermentans (strain ATCC 700394 / DSM 18823 / ISDg) (Clostridium phytofermentans).